We begin with the raw amino-acid sequence, 282 residues long: Phosphate import ATP-binding protein PstB (282 aa).

Basic and acidic residues predominate over residues 1-10 (MNMAESHLDP). A disordered region spans residues 1-24 (MNMAESHLDPSKLATGPAGAGAAT). Low complexity predominate over residues 14–24 (ATGPAGAGAAT). The ABC transporter domain occupies 36 to 277 (IEVKNLNFFY…PARKETEDYI (242 aa)). An ATP-binding site is contributed by 68–75 (GPSGCGKS).

It belongs to the ABC transporter superfamily. Phosphate importer (TC 3.A.1.7) family. In terms of assembly, the complex is composed of two ATP-binding proteins (PstB), two transmembrane proteins (PstC and PstA) and a solute-binding protein (PstS).

The protein resides in the cell inner membrane. It catalyses the reaction phosphate(out) + ATP + H2O = ADP + 2 phosphate(in) + H(+). In terms of biological role, part of the ABC transporter complex PstSACB involved in phosphate import. Responsible for energy coupling to the transport system. The polypeptide is Phosphate import ATP-binding protein PstB (Burkholderia thailandensis (strain ATCC 700388 / DSM 13276 / CCUG 48851 / CIP 106301 / E264)).